Consider the following 826-residue polypeptide: G-protein coupled receptor-associated sorting protein 2 (826 aa).

Disordered stretches follow at residues 1–126 (MTGA…AQAW), 204–286 (WCYP…NPFC), 336–371 (EGNR…QESR), and 506–534 (IPEG…DSVA). The span at 13 to 31 (KPDKKPQEEVAGGAERESE) shows a compositional bias: basic and acidic residues. The segment covering 59-73 (SSRARPKTETQSVSG) has biased composition (polar residues). Basic and acidic residues predominate over residues 231–247 (TREETSIRSWPREEVNT). Residues 248–264 (RSRHRAKHQTNARSKPR) are compositionally biased toward basic residues. Ser275 and Ser277 each carry phosphoserine.

Belongs to the GPRASP family. As to quaternary structure, interacts with cytoplasmic tails of a variety of G-protein coupled receptors such as muscarinic acetylcholine receptor M1/CHRM1 and calcitonin receptor/CALCR. Strongly expressed in the brain and the cochlea. Also in lung and muscle tissues. Localized in multiple structures of the cochlea, detected in the spiral ganglion, stria vascularis, spiral ligament, inner and outer hair cells.

In terms of biological role, may play a role in regulation of a variety of G-protein coupled receptors. This chain is G-protein coupled receptor-associated sorting protein 2 (Gprasp2), found in Mus musculus (Mouse).